The primary structure comprises 214 residues: S-crystallin 1 (214 aa).

The GST N-terminal domain occupies P2 to G79. Residues N81–F214 enclose the GST C-terminal domain.

The protein belongs to the GST superfamily. As to expression, lens.

Functionally, S-crystallins are structural components of squids and octopi eye lens. Contains relatively little GST activity (1/1000 of that of mammalian GST enzyme). The protein is S-crystallin 1 (OCTS1) of Octopus vulgaris (Common octopus).